Reading from the N-terminus, the 130-residue chain is Small ribosomal subunit protein uS8 (130 aa).

The protein belongs to the universal ribosomal protein uS8 family. In terms of assembly, component of the small ribosomal subunit (SSU). Mature N.crassa ribosomes consist of a small (40S) and a large (60S) subunit. The 40S small subunit contains 1 molecule of ribosomal RNA (18S rRNA) and at least 32 different proteins. The large 60S subunit contains 3 rRNA molecules (26S, 5.8S and 5S rRNA) and at least 42 different proteins.

It is found in the cytoplasm. Functionally, component of the ribosome, a large ribonucleoprotein complex responsible for the synthesis of proteins in the cell. The small ribosomal subunit (SSU) binds messenger RNAs (mRNAs) and translates the encoded message by selecting cognate aminoacyl-transfer RNA (tRNA) molecules. The large subunit (LSU) contains the ribosomal catalytic site termed the peptidyl transferase center (PTC), which catalyzes the formation of peptide bonds, thereby polymerizing the amino acids delivered by tRNAs into a polypeptide chain. The nascent polypeptides leave the ribosome through a tunnel in the LSU and interact with protein factors that function in enzymatic processing, targeting, and the membrane insertion of nascent chains at the exit of the ribosomal tunnel. The polypeptide is Small ribosomal subunit protein uS8 (crp-27) (Neurospora crassa (strain ATCC 24698 / 74-OR23-1A / CBS 708.71 / DSM 1257 / FGSC 987)).